A 20-amino-acid polypeptide reads, in one-letter code: Peptide encoded by miPEP171b (20 aa).

Lateral root initiations.

Its function is as follows. Regulatory peptide encoded by the primary transcript (pri-miR171b) of the microRNA miR171b that enhances the accumulation of its corresponding mature miRNA. Acts probably as a transcriptional activator of its corresponding pri-miRNA. Has no effect on the accumulation of other miRNAs. Addition of synthetic miPEP171b increases the abundance of miR171b, with consequent reduction of lateral root formation. This is Peptide encoded by miPEP171b from Medicago truncatula (Barrel medic).